A 136-amino-acid polypeptide reads, in one-letter code: Small ribosomal subunit protein uS8c (136 aa).

It belongs to the universal ribosomal protein uS8 family. In terms of assembly, part of the 30S ribosomal subunit.

The protein localises to the plastid. The protein resides in the chloroplast. One of the primary rRNA binding proteins, it binds directly to 16S rRNA central domain where it helps coordinate assembly of the platform of the 30S subunit. This chain is Small ribosomal subunit protein uS8c (rps8), found in Saccharum hybrid (Sugarcane).